A 298-amino-acid polypeptide reads, in one-letter code: Lipoyl synthase (298 aa).

7 residues coordinate [4Fe-4S] cluster: C40, C45, C51, C67, C71, C74, and S280. Positions 53–269 (AVRRTATFMI…KEIAMQKGFS (217 aa)) constitute a Radical SAM core domain.

This sequence belongs to the radical SAM superfamily. Lipoyl synthase family. [4Fe-4S] cluster serves as cofactor.

The protein localises to the cytoplasm. It catalyses the reaction [[Fe-S] cluster scaffold protein carrying a second [4Fe-4S](2+) cluster] + N(6)-octanoyl-L-lysyl-[protein] + 2 oxidized [2Fe-2S]-[ferredoxin] + 2 S-adenosyl-L-methionine + 4 H(+) = [[Fe-S] cluster scaffold protein] + N(6)-[(R)-dihydrolipoyl]-L-lysyl-[protein] + 4 Fe(3+) + 2 hydrogen sulfide + 2 5'-deoxyadenosine + 2 L-methionine + 2 reduced [2Fe-2S]-[ferredoxin]. It functions in the pathway protein modification; protein lipoylation via endogenous pathway; protein N(6)-(lipoyl)lysine from octanoyl-[acyl-carrier-protein]. Catalyzes the radical-mediated insertion of two sulfur atoms into the C-6 and C-8 positions of the octanoyl moiety bound to the lipoyl domains of lipoate-dependent enzymes, thereby converting the octanoylated domains into lipoylated derivatives. This Bacillus subtilis (strain 168) protein is Lipoyl synthase.